Consider the following 306-residue polypeptide: Reticulocalbin-2 (306 aa).

The N-terminal stretch at 1-22 (MESPTLLGLLLLLLGGPGTSLG) is a signal peptide. 6 EF-hand domains span residues 50–85 (EQQK…SFKS), 86–121 (YIIE…RVID), 144–173 (KKRF…EEAD), 175–210 (MKEF…DPAA), 226–251 (NDYD…NNEG), and 252–287 (LAQE…FLNS). 5 residues coordinate Ca(2+): D99, D101, D103, R105, and E110. Ca(2+) contacts are provided by D188, D190, D192, E199, D229, D231, D233, K235, E240, D265, D267, D269, R271, and E276.

This sequence belongs to the CREC family. In terms of assembly, may bind phospholipase A2, since the rat reticulocalbin-2 has been isolated on the phospholipase complex taipoxin columns. In terms of tissue distribution, expressed by the venom gland.

The protein localises to the secreted. The sequence is that of Reticulocalbin-2 from Crotalus adamanteus (Eastern diamondback rattlesnake).